Reading from the N-terminus, the 323-residue chain is Serine/threonine-protein phosphatase PP1-gamma catalytic subunit (323 aa).

At A2 the chain carries N-acetylalanine. The Mn(2+) site is built by D64, H66, D92, and N124. H125 (proton donor) is an active-site residue. Mn(2+) contacts are provided by H173 and H248. The segment at 302–323 is disordered; sequence KKPNATRPVTPPRGMITKQAKK. Phosphothreonine occurs at positions 307 and 311.

This sequence belongs to the PPP phosphatase family. PP-1 subfamily. In terms of assembly, PP1 comprises a catalytic subunit, PPP1CA, PPP1CB or PPP1CC, which is folded into its native form by inhibitor 2 and glycogen synthetase kinase 3, and then complexed to one or several targeting or regulatory subunits. PPP1R12A, PPP1R12B and PPP1R12C mediate binding to myosin. PPP1R3A (in skeletal muscle), PPP1R3B (in liver), PPP1R3C, PPP1R3D and PPP1R3F (in brain) mediate binding to glycogen. Interacts with cyanobacterial toxin microcystin; disulfide-linked. Interacts with PPP1R3B and PPP1R7. Isoform 2 interacts with SPZ1. Interacts with CDCA2. PPP1R15A and PPP1R15B mediate binding to EIF2S1. Part of a complex containing PPP1R15B, PP1 and NCK1/2. Interacts with IKFZ1; the interaction targets PPP1CC to pericentromeric heterochromatin, dephosphorylates IKAROS, stabilizes it and prevents it from degradation. Interacts with PPP1R42; the interaction is direct. Interacts with NOM1 and PPP1R8. Component of the PTW/PP1 phosphatase complex, composed of PPP1R10/PNUTS, TOX4, WDR82, and PPP1CA or PPP1CB or PPP1CC. Interacts with PPP1R8. Interacts with isoform 1 and isoform 4 NEK2. Interacts with URI1; the interaction is phosphorylation-dependent and occurs in a growth factor-dependent manner. Interacts with FOXP3. Interacts with TMEM225 (via RVxF motif). Interacts with MKI67. Interacts with RRP1B; this targets PPP1CC to the nucleolus. Interacts with PPP1R2B. Found in a complex with PPP1CA, PPP1CC, SHC1 and PEAK1. Interacts with DYNLT4. Interacts (via RVxF motif) with FIRRM; regulates PLK1 kinase activity. Interacts with the KNL1 complex subunit KNL1; the interaction is direct and mutually exclusive with KNL1 binding to microtubules. Component of the SHOC2-MRAS-PP1c (SMP) complex consisting of SHOC2, GTP-bound M-Ras/MRAS and the catalytic subunit of protein phosphatase 1 (either PPP1CA, PPP1CB or PPP1CC). SHOC2 and PP1c preferably bind M-Ras/MRAS, but they also bind K-Ras/KRAS, N-Ras/NRAS and H-Ras/HRAS; these interactions are GTP-dependent and both SHOC2 and PP1c are required to form a stable complex. Interacts with SHOC2 in the absence of Ras GTPases. Mn(2+) serves as cofactor. Phosphorylated by NEK2.

Its subcellular location is the cytoplasm. It localises to the nucleus. It is found in the nucleolus. The protein resides in the nucleoplasm. The protein localises to the nucleus speckle. Its subcellular location is the chromosome. It localises to the centromere. It is found in the kinetochore. The protein resides in the cleavage furrow. The protein localises to the midbody. Its subcellular location is the mitochondrion. It localises to the cytoskeleton. It is found in the microtubule organizing center. The enzyme catalyses O-phospho-L-seryl-[protein] + H2O = L-seryl-[protein] + phosphate. It carries out the reaction O-phospho-L-threonyl-[protein] + H2O = L-threonyl-[protein] + phosphate. With respect to regulation, inactivated by binding to URI1. The phosphatase activity of the PPP1R15A-PP1 complex toward EIF2S1 is specifically inhibited by Salubrinal, a drug that protects cells from endoplasmic reticulum stress. Its function is as follows. Protein phosphatase that associates with over 200 regulatory proteins to form highly specific holoenzymes which dephosphorylate hundreds of biological targets. Protein phosphatase 1 (PP1) is essential for cell division, and participates in the regulation of glycogen metabolism, muscle contractility and protein synthesis. Dephosphorylates RPS6KB1. Involved in regulation of ionic conductances and long-term synaptic plasticity. May play an important role in dephosphorylating substrates such as the postsynaptic density-associated Ca(2+)/calmodulin dependent protein kinase II. Component of the PTW/PP1 phosphatase complex, which plays a role in the control of chromatin structure and cell cycle progression during the transition from mitosis into interphase. In balance with CSNK1D and CSNK1E, determines the circadian period length, through the regulation of the speed and rhythmicity of PER1 and PER2 phosphorylation. May dephosphorylate CSNK1D and CSNK1E. Regulates the recruitment of the SKA complex to kinetochores. Dephosphorylates the 'Ser-418' residue of FOXP3 in regulatory T-cells (Treg) from patients with rheumatoid arthritis, thereby inactivating FOXP3 and rendering Treg cells functionally defective. Together with PPP1CA (PP1-alpha subunit), dephosphorylates IFIH1/MDA5 and RIG-I leading to their activation and a functional innate immune response. Core component of the SHOC2-MRAS-PP1c (SMP) holophosphatase complex that regulates the MAPK pathway activation. The SMP complex specifically dephosphorylates the inhibitory phosphorylation at 'Ser-259' of RAF1 kinase, 'Ser-365' of BRAF kinase and 'Ser-214' of ARAF kinase, stimulating their kinase activities. Dephosphorylates MKI67 at the onset of anaphase. The SMP complex enhances the dephosphorylation activity and substrate specificity of PP1c. In Homo sapiens (Human), this protein is Serine/threonine-protein phosphatase PP1-gamma catalytic subunit (PPP1CC).